Reading from the N-terminus, the 380-residue chain is MAPNLRKSHPLLKLINNSLIDLPTPSNISAWWNFGSLLGICLLTQILTGLLLATHYTADTTLAFSSVAHTCRNVQYGWLIRNLHANGASFFFICIYLHIGRGFYYGSYLNKETWNTGIILLLTLMATAFVGYVLPWGQMSFWGATVITNLFSAIPYIGQTLVEWAWGGFSVDNPTLTRFFALHFLLPFMIAGLALIHLTFLHESGSNNPLGILSNCDKIPFHPYFSLKDILGFIIMFLPLTTLALFSPNLLGDPENFTPANPLVTPPHIKPEWYFLFAYAILRSIPNKLGGVLALAASVLVLFLVPLLHKSKQRAMTFRPLSQFLFWTLVANLLILTWVGSQPVEHPFIIIGQLASLTYFTILLLLFPIIGALENKMLNY.

A run of 4 helical transmembrane segments spans residues 34–54 (FGSL…LLAT), 78–99 (WLIR…YLHI), 114–134 (WNTG…GYVL), and 179–199 (FFAL…IHLT). 2 residues coordinate heme b: His84 and His98. Heme b contacts are provided by His183 and His197. His202 contributes to the a ubiquinone binding site. A run of 4 helical transmembrane segments spans residues 227–247 (LKDI…ALFS), 289–309 (LGGV…PLLH), 321–341 (LSQF…WVGS), and 348–368 (FIII…LLFP).

It belongs to the cytochrome b family. As to quaternary structure, the cytochrome bc1 complex contains 11 subunits: 3 respiratory subunits (MT-CYB, CYC1 and UQCRFS1), 2 core proteins (UQCRC1 and UQCRC2) and 6 low-molecular weight proteins (UQCRH/QCR6, UQCRB/QCR7, UQCRQ/QCR8, UQCR10/QCR9, UQCR11/QCR10 and a cleavage product of UQCRFS1). This cytochrome bc1 complex then forms a dimer. Requires heme b as cofactor.

It localises to the mitochondrion inner membrane. In terms of biological role, component of the ubiquinol-cytochrome c reductase complex (complex III or cytochrome b-c1 complex) that is part of the mitochondrial respiratory chain. The b-c1 complex mediates electron transfer from ubiquinol to cytochrome c. Contributes to the generation of a proton gradient across the mitochondrial membrane that is then used for ATP synthesis. This is Cytochrome b (MT-CYB) from Pinguinus impennis (Great auk).